The primary structure comprises 133 residues: Transcription antitermination protein NusB (133 aa).

This sequence belongs to the NusB family.

Its function is as follows. Involved in transcription antitermination. Required for transcription of ribosomal RNA (rRNA) genes. Binds specifically to the boxA antiterminator sequence of the ribosomal RNA (rrn) operons. In Clostridium novyi (strain NT), this protein is Transcription antitermination protein NusB.